Reading from the N-terminus, the 60-residue chain is MTCCNQQSSQPKTTTNCAESSCYKKTWSDHRGTRIERGCGCPQVKPGIKLECCHTNECNN.

Intrachain disulfides connect Cys3-Cys22, Cys17-Cys39, Cys41-Cys52, and Cys53-Cys58.

This sequence belongs to the three-finger toxin family. Short-chain subfamily. Type I alpha-neurotoxin sub-subfamily. In terms of tissue distribution, expressed by the venom gland.

It localises to the secreted. Functionally, binds to muscle nicotinic acetylcholine receptor (nAChR) and inhibit acetylcholine from binding to the receptor, thereby impairing neuromuscular transmission. The protein is Short neurotoxin 1 of Hydrophis schistosus (Beaked sea snake).